The following is a 424-amino-acid chain: MSDHGDVSLPPEDRVRALSQLGSAVEVNEDIPPRRYFRSGVEIIRMASIYSEEGNIEHAFILYNKYITLFIEKLPKHRDYKSAVIPEKKDTVKKLKEIAFPKAEELKAELLKRYTKEYTEYNEEKKKEAEELARNMAIQQELEKEKQRVAQQKQQQLEQEQFHAFEEMIRNQELEKERLKIVQEFGKVDPGLGGPLVPDLEKPSLDVFPTLTVSSIQPSDCHTTVRPAKPPVVDRSLKPGALSNSESIPTIDGLRHVVVPGRLCPQFLQLASANTARGVETCGILCGKLMRNEFTITHVLIPKQSAGSDYCNTENEEELFLIQDQQGLITLGWIHTHPTQTAFLSSVDLHTHCSYQMMLPESVAIVCSPKFQETGFFKLTDHGLEEISSCRQKGFHPHSKDPPLFCSCSHVTVVDRAVTITDLR.

The tract at residues 1–127 (MSDHGDVSLP…YTEYNEEKKK (127 aa)) is interaction with CHMP3. Phosphoserine occurs at positions 2 and 48. The interaction with STAM stretch occupies residues 227–231 (PAKPP). 3 positions are modified to phosphoserine: Ser243, Ser245, and Ser247. In terms of domain architecture, MPN spans 257 to 388 (VVVPGRLCPQ…LTDHGLEEIS (132 aa)). Positions 335, 337, 348, 350, 390, 396, and 398 each coordinate Zn(2+). The JAMM motif signature appears at 335 to 348 (HTHPTQTAFLSSVD).

The protein belongs to the peptidase M67C family. As to quaternary structure, interacts with STAM. Interacts with SMAD6 and SMAD7. Interacts with CHMP3; the interaction appears to relieve the autoinhibition of CHMP3. Interacts with SMURF2 and RNF11; this interaction promotes ubiquitination. The cofactor is Zn(2+). Post-translationally, phosphorylated after BMP type I receptor activation. Ubiquitinated by SMURF2 in the presence of RNF11. In terms of tissue distribution, ubiquitously expressed.

The protein localises to the nucleus. It is found in the membrane. It localises to the cytoplasm. Its subcellular location is the early endosome. Its activity is regulated as follows. Inhibited by N-ethylmaleimide. Strongly and specifically inhibited by ubiquitin variants UbV(SP.2) and UbV(SP.3). Also inhibited by UbV(SP.1); an ubiquitin variant that also inhibits STAMBPL1. In terms of biological role, zinc metalloprotease that specifically cleaves 'Lys-63'-linked polyubiquitin chains. Does not cleave 'Lys-48'-linked polyubiquitin chains. Plays a role in signal transduction for cell growth and MYC induction mediated by IL-2 and GM-CSF. Potentiates BMP (bone morphogenetic protein) signaling by antagonizing the inhibitory action of SMAD6 and SMAD7. Has a key role in regulation of cell surface receptor-mediated endocytosis and ubiquitin-dependent sorting of receptors to lysosomes. Endosomal localization of STAMBP is required for efficient EGFR degradation but not for its internalization. Involved in the negative regulation of PI3K-AKT-mTOR and RAS-MAP signaling pathways. The sequence is that of STAM-binding protein (STAMBP) from Homo sapiens (Human).